A 433-amino-acid polypeptide reads, in one-letter code: MRSHGQQISDRLTVEVDCHSLGPSDCPSMTSSFSPLDSPTPTPTSLYSQSSMASPVWHEHSHYHHGLPMERRTSATPLRSAFRMTDLTAGDGMMNMPCGHMDRQEQMPLPDYLPGYDDNVEQLWIPQEMPKTYQEPQFPYQASMPQYNQMARNYYHRPQQAGYLPESASNPCLSRPIFTQPMERMPNSASMTNMLHWMPSHESLVPQTITPAQVQPYPSGPVTPPSSAYSDFPTNIPTFKSHTPSTPHRSVSMGTPSGSDTPVSRISGHNDYQEEFQLSPVYREGMMQRHRQPSRKPSKKQLLRSNLSLENLPSIIKQVQFKCKEPGCKGRFKRQEHLKRHMKSHSKEKPHVCWVPGCHRAFSRSDNLNAHYTKTHSKRGGRNRYVATLDETSQDFDPDFRGQLTPDGRPIYGSKLEDSMPDCGELSVDGWDD.

Disordered stretches follow at residues 24–49 (SDCP…LYSQ), 240–269 (KSHT…ISGH), and 286–306 (MMQR…LRSN). Positions 30–49 (TSSFSPLDSPTPTPTSLYSQ) are enriched in low complexity. Residues 240-264 (KSHTPSTPHRSVSMGTPSGSDTPVS) are compositionally biased toward polar residues. Residues 288–302 (QRHRQPSRKPSKKQL) show a composition bias toward basic residues. 2 C2H2-type zinc fingers span residues 321-345 (FKCK…MKSH) and 351-376 (HVCW…TKTH). A disordered region spans residues 391–423 (ETSQDFDPDFRGQLTPDGRPIYGSKLEDSMPDC).

It is found in the nucleus. BrlA, abaA and wetA are pivotal regulators of conidiophore development and conidium maturation. They act individually and together to regulate their own expression and that of numerous other sporulation-specific genes. Binds promoters of target genes at brlA response elements (BREs) containing the conserved sequence 5'-(C/A)(A/G)AGGG(G/A)-3'. Regulates genes involved in conidiogenesis. The polypeptide is C2H2 type master regulator of conidiophore development brlA (Penicillium digitatum (strain PHI26 / CECT 20796) (Green mold)).